The sequence spans 140 residues: Putative nickel-responsive regulator (140 aa).

Residues His81, His92, His94, and Cys100 each coordinate Ni(2+).

Belongs to the transcriptional regulatory CopG/NikR family. Requires Ni(2+) as cofactor.

Transcriptional regulator. The chain is Putative nickel-responsive regulator from Methanothrix thermoacetophila (strain DSM 6194 / JCM 14653 / NBRC 101360 / PT) (Methanosaeta thermophila).